The following is a 98-amino-acid chain: Ferredoxin-like protein (98 aa).

A 4Fe-4S ferredoxin-type domain is found at 57-87; that stretch reads GQVEVTVDGCIECGTCRVIAEPTGDIEWSHP.

The protein to ferredoxins from P.putida and C.tartarivorum, ferredoxin I from A.vinelandii, ferredoxin II from D.desulfuricans.

Functionally, could be a 3Fe-4S cluster-containing protein. The chain is Ferredoxin-like protein (fixX) from Bradyrhizobium diazoefficiens (strain JCM 10833 / BCRC 13528 / IAM 13628 / NBRC 14792 / USDA 110).